The following is a 218-amino-acid chain: Large ribosomal subunit protein eL14 (218 aa).

Lys79 carries the post-translational modification N6-acetyllysine. Residue Lys85 is modified to N6-acetyllysine; alternate. Residue Lys85 is modified to N6-succinyllysine; alternate. Lys124 participates in a covalent cross-link: Glycyl lysine isopeptide (Lys-Gly) (interchain with G-Cter in SUMO2). Ser139 carries the phosphoserine modification. The tract at residues 159 to 218 (VPAKKATAAGKKAAAQKAPAQKAPAQKAAGQKAAQPPKAQKGQKPPAQKAPAPKASGKKA) is disordered. 6 tandem repeats follow at residues 174–178 (QKAPA), 179–183 (QKAPA), 184–188 (QKAAG), 189–193 (QKAAQ), 196–198 (KAQ), and 199–201 (KGQ). A 4 X 5 AA tandem repeats of Q-K-A-[PAS]-X region spans residues 174–193 (QKAPAQKAPAQKAAGQKAAQ). The 2 X 3 AA tandem repeats of K-[GA]-Q stretch occupies residues 196 to 201 (KAQKGQ). An N6-succinyllysine modification is found at Lys207.

This sequence belongs to the eukaryotic ribosomal protein eL14 family. As to quaternary structure, component of the large ribosomal subunit.

It is found in the cytoplasm. Its function is as follows. Component of the large ribosomal subunit. The ribosome is a large ribonucleoprotein complex responsible for the synthesis of proteins in the cell. This chain is Large ribosomal subunit protein eL14 (RPL14), found in Oryctolagus cuniculus (Rabbit).